The primary structure comprises 139 residues: Putative nickel-responsive regulator (139 aa).

Ni(2+) contacts are provided by His79, His90, His92, and Cys98.

Belongs to the transcriptional regulatory CopG/NikR family. It depends on Ni(2+) as a cofactor.

Its function is as follows. Transcriptional regulator. This chain is Putative nickel-responsive regulator, found in Geobacter metallireducens (strain ATCC 53774 / DSM 7210 / GS-15).